We begin with the raw amino-acid sequence, 270 residues long: 2-epi-5-epi-valiolone 7-phosphate 2-epimerase (270 aa).

Active-site proton donor/acceptor residues include Glu-143 and Glu-236.

It belongs to the hyi family.

It carries out the reaction 2-epi-5-epi-valiolone 7-phosphate = 5-epi-valiolone 7-phosphate. Its function is as follows. Involved in the biosynthesis of the alpha-glucosidase inhibitor acarbose. Catalyzes the 2-epimerisation of 2-epi-5-epivaliolone 7-phosphate to yield 5-epi-valiolone 7-phosphate. This Actinoplanes sp. (strain ATCC 31044 / CBS 674.73 / SE50/110) protein is 2-epi-5-epi-valiolone 7-phosphate 2-epimerase (acbO).